Reading from the N-terminus, the 445-residue chain is tRNA-2-methylthio-N(6)-dimethylallyladenosine synthase (445 aa).

One can recognise an MTTase N-terminal domain in the interval 3-120 (RKLFIQTHGC…LPGLITQAAS (118 aa)). Residues Cys-12, Cys-49, Cys-83, Cys-157, Cys-161, and Cys-164 each contribute to the [4Fe-4S] cluster site. In terms of domain architecture, Radical SAM core spans 143-375 (SVDGPSAFVS…QQRINQNVQD (233 aa)). Residues 378 to 442 (RKMVGSTQRI…SNSLLGTDPR (65 aa)) form the TRAM domain.

Belongs to the methylthiotransferase family. MiaB subfamily. As to quaternary structure, monomer. It depends on [4Fe-4S] cluster as a cofactor.

It is found in the cytoplasm. The catalysed reaction is N(6)-dimethylallyladenosine(37) in tRNA + (sulfur carrier)-SH + AH2 + 2 S-adenosyl-L-methionine = 2-methylsulfanyl-N(6)-dimethylallyladenosine(37) in tRNA + (sulfur carrier)-H + 5'-deoxyadenosine + L-methionine + A + S-adenosyl-L-homocysteine + 2 H(+). In terms of biological role, catalyzes the methylthiolation of N6-(dimethylallyl)adenosine (i(6)A), leading to the formation of 2-methylthio-N6-(dimethylallyl)adenosine (ms(2)i(6)A) at position 37 in tRNAs that read codons beginning with uridine. The polypeptide is tRNA-2-methylthio-N(6)-dimethylallyladenosine synthase (Alcanivorax borkumensis (strain ATCC 700651 / DSM 11573 / NCIMB 13689 / SK2)).